We begin with the raw amino-acid sequence, 215 residues long: UPF0319 protein VVA1446 (215 aa).

An N-terminal signal peptide occupies residues 1–21 (MNIIKPLTCILAMSISGLATA).

It belongs to the UPF0319 family.

The sequence is that of UPF0319 protein VVA1446 from Vibrio vulnificus (strain YJ016).